The sequence spans 258 residues: Aspartate/glutamate leucyltransferase (258 aa).

The protein belongs to the R-transferase family. Bpt subfamily.

The protein localises to the cytoplasm. The catalysed reaction is N-terminal L-glutamyl-[protein] + L-leucyl-tRNA(Leu) = N-terminal L-leucyl-L-glutamyl-[protein] + tRNA(Leu) + H(+). The enzyme catalyses N-terminal L-aspartyl-[protein] + L-leucyl-tRNA(Leu) = N-terminal L-leucyl-L-aspartyl-[protein] + tRNA(Leu) + H(+). Functions in the N-end rule pathway of protein degradation where it conjugates Leu from its aminoacyl-tRNA to the N-termini of proteins containing an N-terminal aspartate or glutamate. The chain is Aspartate/glutamate leucyltransferase from Rhodopseudomonas palustris (strain BisA53).